A 117-amino-acid polypeptide reads, in one-letter code: Hemerythrin subunit beta (117 aa).

Residues His24, His53, Glu57, His72, His76, His105, and Asp110 each contribute to the Fe cation site.

Belongs to the hemerythrin family. As to quaternary structure, octamer composed of two types of chains: alpha and beta.

Hemerythrin is a respiratory protein in blood cells of certain marine worms. The oxygen-binding site in each chain contains two iron atoms. The protein is Hemerythrin subunit beta of Lingula reevii (Inarticulated brachiopod).